A 504-amino-acid polypeptide reads, in one-letter code: Catalase (504 aa).

The signal sequence occupies residues 1–21 (MQMSKSFLLITVGLASTSLQA). Active-site residues include H72 and N145. Position 353 (Y353) interacts with heme.

Belongs to the catalase family. The cofactor is heme.

Its subcellular location is the periplasm. It catalyses the reaction 2 H2O2 = O2 + 2 H2O. Functionally, decomposes hydrogen peroxide into water and oxygen; serves to protect cells from the toxic effects of hydrogen peroxide. In Vibrio parahaemolyticus serotype O3:K6 (strain RIMD 2210633), this protein is Catalase.